We begin with the raw amino-acid sequence, 572 residues long: MNALMRRACCGALFPLSFRLAALSPMKGASNFSCGNVCASPAGCWAPPSGHDTGIKVYNSLTRRKDPLILADPTVATWYSCGPTVYDHAHLGHACSYVRFDIIRRILLKVFGIDTVVVMVVTDIDDKIIKRAKELNISPVALARTYEQDFKQDMTALKVLPPTVYMRVTENIPQIISFIEHIIANGYAYATSQGNVYFDVQSIGERYGKFNDSFSDTASESASQDKRHIRDFALWKTSKPEEPYWASPWGKGRPGWHIECSTIASSVFGKHLDIHTGGIDLAFPHHENEIAQCEAYHQSTQWGNYFLHTGHLHLKGNEEKMSKSLRNYLTVKEFLKSFSPDQFRMFCLRSKYKSAVEYSNGSMHDAVNTLHTISSFVDDAKAYMKGQLICQPVQEALLWQRLNETKVNVKAAFSDDFDTPRAVDAVMDLIHHGNRQLKAVSKESNSPRSSVVYGAMISYIEQFLEILGISLSQNQVAAEDRHSAVLFNVVEEMISFRSKVRNYALAADESPNAIGQEEKQQYKERRRQLLLEREPLLQACDIMRQHLAVYGINVKDRGNTSTWELLDRKEET.

Cysteine 81 serves as a coordination point for Zn(2+). An L-cysteine-binding site is contributed by glycine 82. The 'HIGH' region signature appears at 83-93; the sequence is PTVYDHAHLGH. L-cysteine is bound at residue threonine 122. The 'KIIK' region motif lies at 127 to 130; it reads KIIK. Cysteine 260, histidine 285, and glutamate 289 together coordinate Zn(2+). Histidine 285 is a binding site for L-cysteine. Residues 320–324 carry the 'KMSKS' region motif; the sequence is KMSKS. Lysine 323 serves as a coordination point for ATP.

This sequence belongs to the class-I aminoacyl-tRNA synthetase family. Zn(2+) is required as a cofactor.

Its subcellular location is the mitochondrion. The enzyme catalyses tRNA(Cys) + L-cysteine + ATP = L-cysteinyl-tRNA(Cys) + AMP + diphosphate. It carries out the reaction 2 L-cysteine = S-sulfanyl-L-cysteine + L-alanine. It catalyses the reaction S-sulfanyl-L-cysteine + L-cysteine = S-disulfanyl-L-cysteine + L-alanine. The catalysed reaction is S-sulfanyl-L-cysteine + tRNA(Cys) + ATP = (S)-sulfanyl-L-cysteinyl-tRNA(Cys) + AMP + diphosphate. The enzyme catalyses S-disulfanyl-L-cysteine + tRNA(Cys) + ATP = (S)-disulfanyl-L-cysteinyl-tRNA(Cys) + AMP + diphosphate. Mitochondrial cysteine-specific aminoacyl-tRNA synthetase that catalyzes the ATP-dependent ligation of cysteine to tRNA(Cys). In terms of biological role, in addition to its role as an aminoacyl-tRNA synthetase, has also cysteine persulfide synthase activity. Produces reactive persulfide species such as cysteine persulfide (CysSSH) from substrate cysteine and mediate direct incorporation of CysSSH into proteins during translations, resulting in protein persulfides and polysulfides. CysSSHs behave as potent antioxidants and cellular protectants. The sequence is that of Probable cysteine--tRNA ligase, mitochondrial (cars2) from Xenopus tropicalis (Western clawed frog).